The chain runs to 316 residues: MTNTSRPVLNLDLDLLRTFVAVADLNTFAAAAVAVCRTQSAVSQQMQRLEQLIGKELFARHGRNKLLTEHGIQFLGYARKILQFNDEACASLMYSDIQGTLTIGASDDTADTILPFILQRVTNVFPKLSIAVSIKRSAEMTDMLQQGKIDLVITTSNNDDLPHVLLRTSPTLWYCSADYQYQPGETVSLVVLDEPSPFRALALDQLTAAGIPWKISYVASTLSAVRAAVKAGLGITVRSVEMMSPELRVLGEEEGLPKLPDTRYYLCRNPDHDNELTNAIFSAIESGTRSHLLPVSTGTESELREPPTDESLKDIT.

The 58-residue stretch at 11–68 (LDLDLLRTFVAVADLNTFAAAAVAVCRTQSAVSQQMQRLEQLIGKELFARHGRNKLLT) folds into the HTH lysR-type domain. The H-T-H motif DNA-binding region spans 28–47 (FAAAAVAVCRTQSAVSQQMQ). Residues 293–316 (LPVSTGTESELREPPTDESLKDIT) are disordered. Residues 301–316 (SELREPPTDESLKDIT) show a composition bias toward basic and acidic residues.

The protein belongs to the LysR transcriptional regulatory family.

In terms of biological role, regulates pectinase gene expression. The chain is HTH-type transcriptional regulator PecT (pecT) from Dickeya dadantii (strain 3937) (Erwinia chrysanthemi (strain 3937)).